The sequence spans 60 residues: Probable tautomerase SAG1079 (60 aa).

The Proton acceptor; via imino nitrogen role is filled by Pro2.

This sequence belongs to the 4-oxalocrotonate tautomerase family.

In Streptococcus agalactiae serotype V (strain ATCC BAA-611 / 2603 V/R), this protein is Probable tautomerase SAG1079.